The following is a 286-amino-acid chain: ATP synthase gamma chain (286 aa).

The protein belongs to the ATPase gamma chain family. As to quaternary structure, F-type ATPases have 2 components, CF(1) - the catalytic core - and CF(0) - the membrane proton channel. CF(1) has five subunits: alpha(3), beta(3), gamma(1), delta(1), epsilon(1). CF(0) has three main subunits: a, b and c.

The protein localises to the cell inner membrane. Functionally, produces ATP from ADP in the presence of a proton gradient across the membrane. The gamma chain is believed to be important in regulating ATPase activity and the flow of protons through the CF(0) complex. The polypeptide is ATP synthase gamma chain (Shewanella pealeana (strain ATCC 700345 / ANG-SQ1)).